Consider the following 104-residue polypeptide: Thioredoxin-2 (104 aa).

Residues 2–104 form the Thioredoxin domain; the sequence is VTQLKSASEY…AIKQAIASNV (103 aa). Residues C31 and C34 each act as nucleophile in the active site. A disulfide bridge links C31 with C34. S62 carries the phosphoserine modification. Glycyl lysine isopeptide (Lys-Gly) (interchain with G-Cter in ubiquitin) cross-links involve residues K67 and K97.

This sequence belongs to the thioredoxin family. Monomer. Part of the heterodimeric LMA1 complex together with the proteinase inhibitor PBI2. LMA1 binds to the ATPase SEC18. Reversible disulfide bond formation between Cys-31 and Cys-34, reverted by thioredoxin reductase TRR1 using NADPH as hydrogen donor.

The protein resides in the cytoplasm. Its subcellular location is the golgi apparatus membrane. The protein localises to the nucleus. Functionally, participates as a hydrogen donor in redox reactions through the reversible oxidation of its active center dithiol to a disulfide, accompanied by the transfer of 2 electrons and 2 protons. It is involved in many cellular processes, including deoxyribonucleotide synthesis, repair of oxidatively damaged proteins, protein folding, sulfur metabolism, and redox homeostasis. Thioredoxin-dependent enzymes include phosphoadenosine-phosphosulfate reductase MET16, alkyl-hydroperoxide reductase DOT5, thioredoxin peroxidases TSA1 and TSA2, alkyl hydroperoxide reductase AHP1, and peroxiredoxin HYR1. Thioredoxin is also involved in protection against reducing stress. As part of the LMA1 complex, it is involved in the facilitation of vesicle fusion such as homotypic vacuole and ER-derived COPII vesicle fusion with the Golgi. This activity does not require the redox mechanism. Through its capacity to inactivate the stress response transcription factor YAP1 and its regulator the hydroperoxide stress sensor HYR1, it is involved in feedback regulation of stress response gene expression upon oxidative stress. This is Thioredoxin-2 (TRX2) from Saccharomyces cerevisiae (strain ATCC 204508 / S288c) (Baker's yeast).